The following is a 544-amino-acid chain: Membrane protein insertase YidC (544 aa).

The next 6 helical transmembrane spans lie at 13–33 (LSLF…SWML), 321–341 (LWYL…DVIP), 343–363 (WGLS…PLTF), 409–429 (LGGC…YSLV), 461–481 (LYFV…FTQL), and 506–526 (MPIM…IYWI).

This sequence belongs to the OXA1/ALB3/YidC family. Type 1 subfamily. In terms of assembly, interacts with the Sec translocase complex via SecD. Specifically interacts with transmembrane segments of nascent integral membrane proteins during membrane integration.

The protein localises to the cell inner membrane. Functionally, required for the insertion and/or proper folding and/or complex formation of integral membrane proteins into the membrane. Involved in integration of membrane proteins that insert both dependently and independently of the Sec translocase complex, as well as at least some lipoproteins. Aids folding of multispanning membrane proteins. The protein is Membrane protein insertase YidC of Borreliella afzelii (strain PKo) (Borrelia afzelii).